The chain runs to 344 residues: Ribosomal RNA large subunit methyltransferase Cfr (344 aa).

E88 (proton acceptor) is an active-site residue. Residues 95 to 324 (KKGWESFCIS…HANGISVATR (230 aa)) enclose the Radical SAM core domain. C102 and C335 are disulfide-bonded. Residues C109, C113, and C116 each coordinate [4Fe-4S] cluster. S-adenosyl-L-methionine is bound by residues 155–156 (GE), S186, 209–211 (SLH), and N290. Residue C335 is the S-methylcysteine intermediate of the active site.

The protein belongs to the radical SAM superfamily. RlmN family. Cfr subfamily. Requires [4Fe-4S] cluster as cofactor.

It is found in the cytoplasm. It catalyses the reaction adenosine(2503) in 23S rRNA + 2 reduced [2Fe-2S]-[ferredoxin] + 2 S-adenosyl-L-methionine = 8-methyladenosine(2503) in 23S rRNA + 5'-deoxyadenosine + L-methionine + 2 oxidized [2Fe-2S]-[ferredoxin] + S-adenosyl-L-homocysteine. In terms of biological role, specifically methylates position 8 of adenine 2503 in 23S rRNA. Confers resistance to some classes of antibiotics. The chain is Ribosomal RNA large subunit methyltransferase Cfr from Lachnoclostridium phytofermentans (strain ATCC 700394 / DSM 18823 / ISDg) (Clostridium phytofermentans).